A 53-amino-acid polypeptide reads, in one-letter code: UPF0391 membrane protein TM1040_2720 (53 aa).

The next 2 helical transmembrane spans lie at 4-24 (WALA…GGIA) and 29-48 (GIAQ…ALIL).

The protein belongs to the UPF0391 family.

The protein localises to the cell membrane. The chain is UPF0391 membrane protein TM1040_2720 from Ruegeria sp. (strain TM1040) (Silicibacter sp.).